The sequence spans 511 residues: Putative polyol transporter 2 (511 aa).

Helical transmembrane passes span 25–45, 63–83, 94–114, 117–137, 156–176, 186–206, 284–304, 324–344, 351–371, 384–404, 424–444, and 454–474; these read FAFA…YDIG, VQLE…SGAA, YTIV…GFAT, PFIM…MMIA, FPEI…YFFA, FMLG…LAMP, ILIA…DAVV, LATV…TCLV, ALLL…GTSL, WAIG…SLGA, GASL…MTFL, and GAFL…FTFL.

It belongs to the major facilitator superfamily. Sugar transporter (TC 2.A.1.1) family.

Its subcellular location is the membrane. Functionally, plasma membrane sugar-proton symporter. The polypeptide is Putative polyol transporter 2 (PLT2) (Arabidopsis thaliana (Mouse-ear cress)).